We begin with the raw amino-acid sequence, 192 residues long: Natural cytotoxicity triggering receptor 3 (192 aa).

The N-terminal stretch at 1 to 18 (MAKVLLIVFIMVYAGSCA) is a signal peptide. Residues 19–126 (IWVSQPPEIR…VGTGNGTRLV (108 aa)) enclose the Ig-like domain. Over 19-147 (IWVSQPPEIR…AEPERAAYTS (129 aa)) the chain is Extracellular. Cys39 and Cys108 are disulfide-bonded. Asn42 and Asn121 each carry an N-linked (GlcNAc...) asparagine glycan. The chain crosses the membrane as a helical span at residues 148-168 (LLLRAGVYALSFLSVATGSVI). Residues 169 to 192 (YYQGKCLCHVGNTATPPTASEERF) lie on the Cytoplasmic side of the membrane.

This sequence belongs to the natural cytotoxicity receptor (NCR) family. In terms of assembly, homodimer in the unliganted form. Interacts with CD3Z. Interacts with and is activated by binding to NCR3LG1. Interacts with and is activated by binding to BAG6. Interacts with and is inhibited by binding to LGALS3.

The protein localises to the cell membrane. In terms of biological role, cell membrane receptor of natural killer/NK cells that is activated by binding of extracellular ligands including BAG6 and NCR3LG1. Stimulates NK cells cytotoxicity toward neighboring cells producing these ligands. It controls, for instance, NK cells cytotoxicity against tumor cells. Engagement of NCR3 by BAG6 also promotes myeloid dendritic cells (DC) maturation, both through killing DCs that did not acquire a mature phenotype, and inducing the release by NK cells of TNFA and IFNG that promote DC maturation. The chain is Natural cytotoxicity triggering receptor 3 (Ncr3) from Rattus norvegicus (Rat).